The primary structure comprises 163 residues: Nucleotide-binding protein Bcer98_0876 (163 aa).

It belongs to the YajQ family.

In terms of biological role, nucleotide-binding protein. The chain is Nucleotide-binding protein Bcer98_0876 from Bacillus cytotoxicus (strain DSM 22905 / CIP 110041 / 391-98 / NVH 391-98).